Here is an 899-residue protein sequence, read N- to C-terminus: Periodic tryptophan protein 2 homolog (899 aa).

WD repeat units lie at residues 9–52, 53–92, 94–132, 149–188, 193–232, 252–291, 294–334, 337–376, 379–418, 422–464, 465–504, 507–546, and 569–608; these read NLLG…TLPF, SHRK…VLYH, SFKA…DANA, QHFD…GFTP, GHRQ…GQDE, QNSA…MIHT, ISQN…YILK, GHFD…CIVT, EHTS…NFRT, PERL…DRLS, GHEG…QTSE, QLNS…QQAG, and AGTK…LLKK. The disordered stretch occupies residues 639-668; it reads DEQGEASDFEDRIDRSLPGSKRGDPSARRK. Over residues 647–668 the composition is skewed to basic and acidic residues; that stretch reads FEDRIDRSLPGSKRGDPSARRK. The stretch at 669–709 is one WD 14 repeat; it reads NPEVRVNGVAFSPNGSAFCAASTEGLLIYSLDTTIQFDPFD. The interval 866 to 899 is disordered; the sequence is TGSDEQPGAGGMSLNDVMQQDEGNASEDEWIGLV. Residues 889–899 are compositionally biased toward acidic residues; sequence NASEDEWIGLV.

This sequence belongs to the WD repeat PWP2 family.

The sequence is that of Periodic tryptophan protein 2 homolog from Neurospora crassa (strain ATCC 24698 / 74-OR23-1A / CBS 708.71 / DSM 1257 / FGSC 987).